The following is a 109-amino-acid chain: Hainantoxin-XVIII-2 (109 aa).

A signal peptide spans 1 to 18 (MKLSIIIIATSLVIAVVA). Residues 19-46 (FPSKDSKAIENDKTEQRMEIVVQETARA) constitute a propeptide that is removed on maturation. 3 disulfide bridges follow: cysteine 47–cysteine 62, cysteine 59–cysteine 108, and cysteine 61–cysteine 81.

The protein belongs to the neurotoxin 25 family. F7 subfamily. As to expression, expressed by the venom gland.

The protein resides in the secreted. Putative ion channel inhibitor. The chain is Hainantoxin-XVIII-2 from Cyriopagopus hainanus (Chinese bird spider).